The chain runs to 320 residues: Malate dehydrogenase (320 aa).

NAD(+) contacts are provided by residues 10–15 (GSGMIG) and Asp34. Substrate is bound by residues Arg83 and Arg89. NAD(+) is bound by residues Asn96 and 119–121 (ITN). Positions 121 and 152 each coordinate substrate. His176 functions as the Proton acceptor in the catalytic mechanism.

It belongs to the LDH/MDH superfamily. MDH type 3 family.

It catalyses the reaction (S)-malate + NAD(+) = oxaloacetate + NADH + H(+). Functionally, catalyzes the reversible oxidation of malate to oxaloacetate. The protein is Malate dehydrogenase of Hyphomonas neptunium (strain ATCC 15444).